Consider the following 186-residue polypeptide: Signal peptidase complex catalytic subunit SEC11 (186 aa).

Residues 1-20 (MDALGLSKLRHLKPRQLLSQ) lie on the Cytoplasmic side of the membrane. A helical; Signal-anchor for type II membrane protein transmembrane segment spans residues 21 to 41 (VLNFALILSTAFMLWKGLSVA). Residues 42-186 (TDSPSPIVVV…MGLLVIVQRE (145 aa)) lie on the Lumenal side of the membrane. Residues S55, H102, and D128 each act as charge relay system in the active site. Positions 172 to 183 (ALLGIMGLLVIV) are C-terminal short (CTS) helix.

It belongs to the peptidase S26B family. In terms of assembly, component of the signal peptidase complex (SPC) composed of a catalytic subunit SEC11 and three accessory subunits SPC1, SPC2 and SPC3. The complex induces a local thinning of the ER membrane which is used to measure the length of the signal peptide (SP) h-region of protein substrates. This ensures the selectivity of the complex towards h-regions shorter than 18-20 amino acids. SPC associates with the translocon complex.

Its subcellular location is the endoplasmic reticulum membrane. It carries out the reaction Cleavage of hydrophobic, N-terminal signal or leader sequences from secreted and periplasmic proteins.. In terms of biological role, catalytic component of the signal peptidase complex (SPC) which catalyzes the cleavage of N-terminal signal sequences from nascent proteins as they are translocated into the lumen of the endoplasmic reticulum. Specifically cleaves N-terminal signal peptides that contain a hydrophobic alpha-helix (h-region) shorter than 18-20 amino acids. This Tuber melanosporum (strain Mel28) (Perigord black truffle) protein is Signal peptidase complex catalytic subunit SEC11 (SEC11).